The primary structure comprises 360 residues: Peptide chain release factor 1 (360 aa).

An N5-methylglutamine modification is found at Gln235.

It belongs to the prokaryotic/mitochondrial release factor family. In terms of processing, methylated by PrmC. Methylation increases the termination efficiency of RF1.

The protein localises to the cytoplasm. In terms of biological role, peptide chain release factor 1 directs the termination of translation in response to the peptide chain termination codons UAG and UAA. This chain is Peptide chain release factor 1, found in Burkholderia multivorans (strain ATCC 17616 / 249).